Consider the following 391-residue polypeptide: S-adenosylmethionine synthase (391 aa).

An ATP-binding site is contributed by histidine 14. Aspartate 16 provides a ligand contact to Mg(2+). Glutamate 42 serves as a coordination point for K(+). L-methionine-binding residues include glutamate 55 and glutamine 98. Positions 98–108 (QSVDIAIGVDE) are flexible loop. Residues 172-174 (DGK), 238-239 (RF), aspartate 247, 253-254 (RK), alanine 270, and lysine 274 contribute to the ATP site. Aspartate 247 is an L-methionine binding site. Lysine 278 is an L-methionine binding site.

Belongs to the AdoMet synthase family. In terms of assembly, homotetramer; dimer of dimers. The cofactor is Mg(2+). It depends on K(+) as a cofactor.

The protein resides in the cytoplasm. It carries out the reaction L-methionine + ATP + H2O = S-adenosyl-L-methionine + phosphate + diphosphate. It functions in the pathway amino-acid biosynthesis; S-adenosyl-L-methionine biosynthesis; S-adenosyl-L-methionine from L-methionine: step 1/1. Its function is as follows. Catalyzes the formation of S-adenosylmethionine (AdoMet) from methionine and ATP. The overall synthetic reaction is composed of two sequential steps, AdoMet formation and the subsequent tripolyphosphate hydrolysis which occurs prior to release of AdoMet from the enzyme. This chain is S-adenosylmethionine synthase, found in Clostridium botulinum (strain Okra / Type B1).